A 159-amino-acid chain; its full sequence is SsrA-binding protein (159 aa).

Residues 140–150 show a composition bias toward basic and acidic residues; the sequence is RATEKERDWNR. Residues 140 to 159 form a disordered region; the sequence is RATEKERDWNRQKQRVLRQR.

It belongs to the SmpB family.

It localises to the cytoplasm. Required for rescue of stalled ribosomes mediated by trans-translation. Binds to transfer-messenger RNA (tmRNA), required for stable association of tmRNA with ribosomes. tmRNA and SmpB together mimic tRNA shape, replacing the anticodon stem-loop with SmpB. tmRNA is encoded by the ssrA gene; the 2 termini fold to resemble tRNA(Ala) and it encodes a 'tag peptide', a short internal open reading frame. During trans-translation Ala-aminoacylated tmRNA acts like a tRNA, entering the A-site of stalled ribosomes, displacing the stalled mRNA. The ribosome then switches to translate the ORF on the tmRNA; the nascent peptide is terminated with the 'tag peptide' encoded by the tmRNA and targeted for degradation. The ribosome is freed to recommence translation, which seems to be the essential function of trans-translation. In Alcanivorax borkumensis (strain ATCC 700651 / DSM 11573 / NCIMB 13689 / SK2), this protein is SsrA-binding protein.